The primary structure comprises 428 residues: Growth/differentiation factor 2 (428 aa).

Positions 1–22 (MSPGAFRVALLPLFLLVCVTQQ) are cleaved as a signal peptide. Residues 23–318 (KPLQNWEQAS…VGPLLARRKR (296 aa)) constitute a propeptide that is removed on maturation. N-linked (GlcNAc...) asparagine glycans are attached at residues Asn70 and Asn135. A disulfide bond links Cys155 and Cys236. Asn262 carries N-linked (GlcNAc...) asparagine glycosylation. 3 cysteine pairs are disulfide-bonded: Cys326–Cys392, Cys355–Cys425, and Cys359–Cys427. Residues 401-415 (SILYKDDMGVPTLKY) are interaction with ENG.

Belongs to the TGF-beta family. Homodimer; disulfide-linked. Detected in extracellular fluid as mature homodimer, and in complex with its propeptide. Interacts with ACVRL1, BMPR2 and ACVR2B with high affinity (in vitro). Identified in a complex with ACVRL1 and ACVR2B. Has ten times lower affinity for ACVR2A (in vitro). Interacts with ENG, forming a heterotetramer with a 2:2 stoichiometry. Can form a heteromeric complex with ENG and ACVRL1. Interacts with type I receptor ACVR1. Post-translationally, a reversible disulfide bond can be formed between the two subunits in the homodimer; this has no effect on GDF2 activity.

The protein resides in the secreted. Functionally, potent circulating inhibitor of angiogenesis. Signals through the type I activin receptor ACVRL1 but not other Alks. Signaling through SMAD1 in endothelial cells requires TGF-beta coreceptor endoglin/ENG. The chain is Growth/differentiation factor 2 (Gdf2) from Mus musculus (Mouse).